The primary structure comprises 289 residues: Bis(5'-nucleosyl)-tetraphosphatase, symmetrical (289 aa).

It belongs to the Ap4A hydrolase family.

The enzyme catalyses P(1),P(4)-bis(5'-adenosyl) tetraphosphate + H2O = 2 ADP + 2 H(+). Hydrolyzes diadenosine 5',5'''-P1,P4-tetraphosphate to yield ADP. The polypeptide is Bis(5'-nucleosyl)-tetraphosphatase, symmetrical (Yersinia pestis bv. Antiqua (strain Antiqua)).